The chain runs to 70 residues: MKVYCLLVVLLVGLVSQTQGQLDKKCNMACTLDYRPVCGSDGKTYPNRCALTSTACESQQSITVLHDGEC.

The signal sequence occupies residues 1 to 20 (MKVYCLLVVLLVGLVSQTQG). The region spanning 21–70 (QLDKKCNMACTLDYRPVCGSDGKTYPNRCALTSTACESQQSITVLHDGEC) is the Kazal-like domain. Cystine bridges form between Cys26–Cys56, Cys30–Cys49, and Cys38–Cys70.

It belongs to the conopeptide P-like superfamily. In terms of tissue distribution, expressed by the venom duct.

Its subcellular location is the secreted. In terms of biological role, acts as a neurotoxin by inhibiting an ion channel. May also act as a serine protease inhibitor, since it possess the kazal serine protease inhibitor signature. In Polystira albida (White giant-turris), this protein is Turripeptide Pal9.2.